Consider the following 769-residue polypeptide: Subtilisin-like protease 3 (769 aa).

6 N-linked (GlcNAc...) asparagine glycosylation sites follow: asparagine 68, asparagine 102, asparagine 108, asparagine 295, asparagine 316, and asparagine 356. Basic residues predominate over residues 293–302 (KINHSNKHKN). The tract at residues 293 to 329 (KINHSNKHKNNNNNNNNNDYHNNNKSNYHSHSSAKCQ) is disordered. Positions 303 to 325 (NNNNNNNNDYHNNNKSNYHSHSS) are enriched in low complexity. One can recognise a Peptidase S8 domain in the interval 345–756 (GYDIIQMEEG…GGFINVYDLV (412 aa)). The active-site Charge relay system is aspartate 372. A disordered region spans residues 468 to 493 (NIKSSDNIKSSDNINSSDNIKSSDNN). Residues asparagine 482 and asparagine 515 are each glycosylated (N-linked (GlcNAc...) asparagine). Histidine 523 acts as the Charge relay system in catalysis. Residues asparagine 584 and asparagine 616 are each glycosylated (N-linked (GlcNAc...) asparagine). The active-site Charge relay system is serine 701. Residue asparagine 720 is glycosylated (N-linked (GlcNAc...) asparagine).

The protein belongs to the peptidase S8 family.

Its subcellular location is the secreted. It catalyses the reaction Hydrolysis of proteins with broad specificity for peptide bonds, and a preference for a large uncharged residue in P1. Hydrolyzes peptide amides.. In terms of biological role, serine protease which may cleave PFN/profilin. This is Subtilisin-like protease 3 from Plasmodium falciparum (isolate 3D7).